The primary structure comprises 444 residues: Jacalin-related lectin 11 (444 aa).

Position 2 is an N-acetylalanine (Ala2). 3 Jacalin-type lectin domains span residues 2–143 (ALKV…YFIK), 146–290 (SIQS…YYAP), and 298–442 (PEKL…HVTA).

The protein belongs to the jacalin lectin family.

In Arabidopsis thaliana (Mouse-ear cress), this protein is Jacalin-related lectin 11 (JAL11).